Reading from the N-terminus, the 83-residue chain is MFVLDDLFVNPFLSLVDILQTMALDELYDTSEIRDQIKENQLLYEIGDRPADEYERRKQELEAQLRTAEQIRDQMRDRMEIKN.

The protein belongs to the gas vesicle GvpG family. As to quaternary structure, gvpF to GvpM interact with each other in vitro, and may form multi-subunit complex(es).

It localises to the gas vesicle. Its function is as follows. Proteins GvpF to GvpM might be involved in nucleating gas vesicle formation. A minor component of the gas vesicle. Gas vesicles are hollow, gas filled proteinaceous nanostructures found in several microbial planktonic microorganisms. They allow positioning of halobacteria at the optimal depth for growth in the poorly aerated, shallow brine pools of their habitat. In terms of biological role, expression of 2 c-vac DNA fragments containing 2 divergently transcribed regions (gvpE-gvpF-gvpG-gvpH-gvpI-gvpJ-gvpK-gvpL-gvpM and gvpA-gvpC-gvpN-gvpO) allows H.volcanii to produce gas vesicles. This Halobacterium salinarum (strain ATCC 700922 / JCM 11081 / NRC-1) (Halobacterium halobium) protein is Gas vesicle protein G2.